The sequence spans 502 residues: Glutamate--tRNA ligase (502 aa).

The 'HIGH' region signature appears at 12 to 22; it reads PSPTGYLHVGG. Residues 259 to 263 carry the 'KMSKS' region motif; sequence KLSKR. K262 lines the ATP pocket.

The protein belongs to the class-I aminoacyl-tRNA synthetase family. Glutamate--tRNA ligase type 1 subfamily. As to quaternary structure, monomer.

It localises to the cytoplasm. The catalysed reaction is tRNA(Glu) + L-glutamate + ATP = L-glutamyl-tRNA(Glu) + AMP + diphosphate. Functionally, catalyzes the attachment of glutamate to tRNA(Glu) in a two-step reaction: glutamate is first activated by ATP to form Glu-AMP and then transferred to the acceptor end of tRNA(Glu). The protein is Glutamate--tRNA ligase of Chlorobium chlorochromatii (strain CaD3).